Reading from the N-terminus, the 657-residue chain is MSFLKFAYRNSWRYYSKSTRHFHKIPIRQFIIPTSIAFYLTQNSFPKQNCLIYNDSLKPDPKGDTFEMGLYVSSENELQEKLKSFRSAKITESRNKLIRYLRIFWFGFNDNIVEPVCTILRFLEISAIFLPLLLLYPISWFGHKLKITDTNITETRGSLIWCQLLRKALELAGPSFIKLGQWAGSRTDIFSHALCHELGKLHSNVTAHSLSFTLEKLSQALKVDKIEDAFDEFNRTPIGVGSIAQVYVGELSQKYIDKYDNIQIGKDGNRWCAIKILHPNVRSQIRRDLKIMKFCADAINWIPTMEWLSLPSEVDQFSILMNIQLDLRIEALNLERFNENFKNSIQVKFPKPFLPLSNRDVMFEEHVYGLSMEKFLSTKKQINDVELCKKVSDPFVDAFLQMLILDDFVHADLHPGNVIIRFVKTNKYGTNIISSELESYRITHDLRKKIEEDQDQDFVGKLKSVLTNYTPQICFIDTGIITELNEKNRINFIALFNALARFDGYRAGELMIERSRTPETAIDKEVFAFKVEKLVDKVKQRTFTLGTVSIGDLLDQMLSMVRSHHVRMESDFVSVVVAILLLEGIGRQLDPNLDLFESSLPILREFGFKREAKSLLKDASTLSMLKIWVGLEVRQLMHLSMKQIYDLVRTDQLCPNY.

The N-terminal 15 residues, 1–15 (MSFLKFAYRNSWRYY), are a transit peptide targeting the mitochondrion.

Belongs to the protein kinase superfamily. ADCK protein kinase family.

It is found in the mitochondrion. In Saccharomyces cerevisiae (strain ATCC 204508 / S288c) (Baker's yeast), this protein is ABC1 family protein YPL109C, mitochondrial.